A 321-amino-acid polypeptide reads, in one-letter code: Thioredoxin reductase (321 aa).

FAD contacts are provided by residues 11 to 14, 40 to 41, Gln45, Asn54, Cys145, Asp288, and 295 to 297; these read SGPA, TA, and RQA. An intrachain disulfide couples Cys142 to Cys145.

This sequence belongs to the class-II pyridine nucleotide-disulfide oxidoreductase family. In terms of assembly, homodimer. FAD serves as cofactor.

The protein localises to the cytoplasm. The enzyme catalyses [thioredoxin]-dithiol + NADP(+) = [thioredoxin]-disulfide + NADPH + H(+). The protein is Thioredoxin reductase (TRR1) of Debaryomyces hansenii (strain ATCC 36239 / CBS 767 / BCRC 21394 / JCM 1990 / NBRC 0083 / IGC 2968) (Yeast).